Consider the following 316-residue polypeptide: tRNA pseudouridine synthase B (316 aa).

Catalysis depends on aspartate 47, which acts as the Nucleophile.

This sequence belongs to the pseudouridine synthase TruB family. Type 1 subfamily.

It carries out the reaction uridine(55) in tRNA = pseudouridine(55) in tRNA. Its function is as follows. Responsible for synthesis of pseudouridine from uracil-55 in the psi GC loop of transfer RNAs. The sequence is that of tRNA pseudouridine synthase B from Aliivibrio fischeri (strain ATCC 700601 / ES114) (Vibrio fischeri).